The sequence spans 171 residues: Co-chaperone protein HscB homolog (171 aa).

Residues 2 to 74 (NYFELFGLPI…LRRAEYLLSL (73 aa)) enclose the J domain.

Belongs to the HscB family. As to quaternary structure, interacts with HscA and stimulates its ATPase activity.

Its function is as follows. Co-chaperone involved in the maturation of iron-sulfur cluster-containing proteins. Seems to help targeting proteins to be folded toward HscA. This chain is Co-chaperone protein HscB homolog, found in Vibrio cholerae serotype O1 (strain ATCC 39541 / Classical Ogawa 395 / O395).